The primary structure comprises 318 residues: Retinol dehydrogenase 11 (318 aa).

A helical; Signal-anchor for type II membrane protein transmembrane segment spans residues 1–21 (MVELMFPLLLLLLPFLLYMAA). The Cytoplasmic portion of the chain corresponds to 22–318 (PQIRKMLSSG…SCDLLGLPID (297 aa)). NADP(+) is bound at residue 48–54 (GANTGIG). Lysine 112 carries the N6-acetyllysine modification. Residue serine 177 coordinates substrate. Tyrosine 202 functions as the Proton acceptor in the catalytic mechanism.

Belongs to the short-chain dehydrogenases/reductases (SDR) family. In terms of assembly, interacts with SELENOF. In terms of processing, not glycosylated. As to expression, predominantly expressed in the epithelial cells of prostate, in both basal and luminal secretory cell populations. Expressed at low levels in spleen, thymus, testis, ovary, small intestine, colon, peripherical blood leukocytes, kidney, adrenal gland and fetal liver. Not detected in prostatic fibromuscular stromal cells, endothelial cells, or infiltrating lymphocytes.

Its subcellular location is the endoplasmic reticulum membrane. The catalysed reaction is all-trans-retinol + NADP(+) = all-trans-retinal + NADPH + H(+). It carries out the reaction 11-cis-retinol + NADP(+) = 11-cis-retinal + NADPH + H(+). The enzyme catalyses 9-cis-retinol + NADP(+) = 9-cis-retinal + NADPH + H(+). It catalyses the reaction 13-cis-retinol + NADP(+) = 13-cis-retinal + NADPH + H(+). It functions in the pathway cofactor metabolism; retinol metabolism. With respect to regulation, SELENOF decreases the retinol dehydrogenase activity. Its function is as follows. Retinol dehydrogenase with a clear preference for NADP. Displays high activity towards 9-cis, 11-cis and all-trans-retinol, and to a lesser extent on 13-cis-retinol. Exhibits a low reductive activity towards unsaturated medium-chain aldehydes such as cis -6-nonenal and no activity toward nonanal or 4-hydroxy-nonenal. Has no dehydrogenase activity towards steroid. The protein is Retinol dehydrogenase 11 (RDH11) of Homo sapiens (Human).